The primary structure comprises 267 residues: Diphthine synthase (267 aa).

S-adenosyl-L-methionine is bound by residues Leu9, Asp85, Val88, Ser113 to Ile114, Leu170, Ala211, and His236.

It belongs to the diphthine synthase family. As to quaternary structure, homodimer.

The enzyme catalyses 2-[(3S)-amino-3-carboxypropyl]-L-histidyl-[translation elongation factor 2] + 3 S-adenosyl-L-methionine = diphthine-[translation elongation factor 2] + 3 S-adenosyl-L-homocysteine + 3 H(+). It functions in the pathway protein modification; peptidyl-diphthamide biosynthesis. Functionally, S-adenosyl-L-methionine-dependent methyltransferase that catalyzes the trimethylation of the amino group of the modified target histidine residue in translation elongation factor 2 (EF-2), to form an intermediate called diphthine. The three successive methylation reactions represent the second step of diphthamide biosynthesis. This chain is Diphthine synthase, found in Methanococcoides burtonii (strain DSM 6242 / NBRC 107633 / OCM 468 / ACE-M).